Reading from the N-terminus, the 453-residue chain is MSQILTSRQADELHRALIAYLTAANLPNTAAALREELNLSEEVFDPATAKKYEGLLEKKWTSVVRLQKKIMDLESRNHILQSELDNATPTSRQNKDPVAWLPRAPPRHTLQSHRDPITCVAFHPVFSSLASGSEDQTIKIWDWELGELERTIKGHTKAVLDVDYGGPRGNTLLASCSSDLTIKLWDPLDSYKNIRTLPGHDHSVSAVRFIPGSGNLLVSASRDKTLRIWDVSTGYCVKTLRGHAEWVRDVCPSLDGKYILSTSDDYTSRLWDVTITNPEPKVTLIGHEHVVLCCAIAPPAAYQNLAAMAGIKKPPATSSAEFMATGSRDKSIRLWDARGTCIKTLVGHDNWVRGLVFHPGGKYLLSVSDDKTLRCWDLTQEGKCVKTIGDAHGHFVQCIKWAPSVIKDASVNGDNGEPNGTPKKGGAAATPEAQIRCVIATGSVDLNVRIFAN.

Residues 9-41 (QADELHRALIAYLTAANLPNTAAALREELNLSE) enclose the LisH domain. The stretch at 62–88 (SVVRLQKKIMDLESRNHILQSELDNAT) forms a coiled coil. Residues 84-107 (LDNATPTSRQNKDPVAWLPRAPPR) are disordered. WD repeat units lie at residues 112 to 153 (SHRD…RTIK), 155 to 195 (HTKA…KNIR), 199 to 239 (GHDH…CVKT), 242 to 281 (GHAE…PEPK), 286 to 345 (GHEH…IKTL), 347 to 386 (GHDN…KCVK), and 391 to 449 (AHGH…LNVR).

This sequence belongs to the WD repeat LIS1/nudF family. In terms of assembly, self-associates. Interacts with ro-11/nde1 and dynein.

Its subcellular location is the cytoplasm. The protein resides in the cytoskeleton. The protein localises to the spindle pole. Positively regulates the activity of the minus-end directed microtubule motor protein dynein. May enhance dynein-mediated microtubule sliding by targeting dynein to the microtubule plus end. Required for nuclear migration during vegetative growth as well as development. Required for retrograde early endosome (EE) transport from the hyphal tip. Required for localization of dynein to the mitotic spindle poles. Recruits additional proteins to the dynein complex at SPBs. This Neurospora crassa (strain ATCC 24698 / 74-OR23-1A / CBS 708.71 / DSM 1257 / FGSC 987) protein is Nuclear distribution protein nudF-2 (nmp-1).